The chain runs to 170 residues: Odorant-binding protein 2b (170 aa).

The first 15 residues, 1 to 15 (MKTLFLGVTLGLAAA), serve as a signal peptide directing secretion. An intrachain disulfide couples C74 to C166.

It belongs to the calycin superfamily. Lipocalin family. As to expression, strongly expressed in genital sphere organs such as the prostate and mammary glands.

It localises to the secreted. In terms of biological role, probably binds and transports small hydrophobic volatile molecules. The sequence is that of Odorant-binding protein 2b (OBP2B) from Homo sapiens (Human).